Here is a 545-residue protein sequence, read N- to C-terminus: Degenerin-like protein asic-2 (545 aa).

At 1-34 the chain is on the cytoplasmic side; sequence MRGGGFVQIFKDFSNWSTVAVVPHVANANNKISR. Residues 35 to 55 form a helical membrane-spanning segment; that stretch reads IFWIAIFLFVLGMFAYELYIL. Residues 56-457 are Extracellular-facing; the sequence is IAKFFSYPAT…NVINDLGGQA (402 aa). Cysteines 83 and 191 form a disulfide. N-linked (GlcNAc...) asparagine glycosylation is present at Asn201. 5 disulfide bridges follow: Cys284/Cys370, Cys305/Cys366, Cys309/Cys364, Cys318/Cys343, and Cys320/Cys334. Asn350 is a glycosylation site (N-linked (GlcNAc...) asparagine). The chain crosses the membrane as a helical span at residues 458-478; sequence GLWLGLSVISVVEMTGLMLVM. The short motif at 462–464 is the GAS motif; ion selectivity filter element; the sequence is GLS. At 479 to 545 the chain is on the cytoplasmic side; the sequence is GAFCVTGGAI…NKGDEEKKKK (67 aa). Composition is skewed to basic and acidic residues over residues 514–523 and 534–545; these read DHLEKKHGEM and IENKGDEEKKKK. Residues 514–545 form a disordered region; sequence DHLEKKHGEMESGSDGEVDDIENKGDEEKKKK.

It belongs to the amiloride-sensitive sodium channel (TC 1.A.6) family. In terms of assembly, can form homotrimers. Heterotrimer; forms functional heterotrimers producing channel with different properties.

Its subcellular location is the cell membrane. The enzyme catalyses Na(+)(in) = Na(+)(out). With respect to regulation, inhibited by the diuretic drug amiloride. Could form pH-gated heterotrimeric sodium channels that act as postsynaptic excitatory sensors in the nervous system, generating rapid, transient inward currents that fully desensitize upon extracellular acidification. The polypeptide is Degenerin-like protein asic-2 (asic-2) (Caenorhabditis elegans).